The primary structure comprises 181 residues: S-fimbrial protein subunit SfaA (181 aa).

A signal peptide spans 1–24 (MKLKFISMAVFSALTLGVATNASA). Cysteines 44 and 84 form a disulfide.

It belongs to the fimbrial protein family.

The protein localises to the fimbrium. Fimbriae (also called pili), polar filaments radiating from the surface of the bacterium to a length of 0.5-1.5 micrometers and numbering 100-300 per cell, enable bacteria to colonize the epithelium of specific host organs. Functionally, the major fimbrial subunit. Interacts with alpha-sialic acid-(2-3)-beta-Gal containing receptors. It belongs to the group of Mrh (Mannose-resistant hemagglutination) fimbrial proteins. The protein is S-fimbrial protein subunit SfaA (sfaA) of Escherichia coli O6:K15:H31 (strain 536 / UPEC).